The sequence spans 437 residues: Succinate--CoA ligase [ADP-forming] subunit beta, hydrogenosomal (437 aa).

Residues 1-27 constitute a hydrogenosome transit peptide; the sequence is MLANVTRSTSKAAPALASIAQTAQKRF. Residues 36–278 form the ATP-grasp domain; the sequence is MNLLHEYNVN…TTQEDPREVA (243 aa). Residues Lys73, 80–82, and Glu141 contribute to the ATP site; that span reads GRG. Residues Asn233 and Asp247 each contribute to the Mg(2+) site. Residues Asn299 and 356 to 358 each bind substrate; that span reads GIM.

It belongs to the succinate/malate CoA ligase beta subunit family. In terms of assembly, heterodimer of an alpha and a beta subunit. Mg(2+) is required as a cofactor.

The protein resides in the hydrogenosome. The enzyme catalyses succinate + ATP + CoA = succinyl-CoA + ADP + phosphate. It functions in the pathway carbohydrate metabolism; tricarboxylic acid cycle; succinate from succinyl-CoA (ligase route): step 1/1. Succinyl-CoA synthetase functions in the citric acid cycle (TCA), coupling the hydrolysis of succinyl-CoA to the synthesis of ATP and thus represents the only step of substrate-level phosphorylation in the TCA. The beta subunit provides nucleotide specificity of the enzyme and binds the substrate succinate, while the binding sites for coenzyme A and phosphate are found in the alpha subunit. The protein is Succinate--CoA ligase [ADP-forming] subunit beta, hydrogenosomal of Neocallimastix frontalis (Rumen fungus).